We begin with the raw amino-acid sequence, 155 residues long: MKIQLIAVGTKMPVWVKNGFEEYQRRFPKDMPFELIEIAAGKLGKNADIKRILEQEGKAMLAAAGKAKIVSLDIPGKPWTTEQLATQLESWKSDGRDICLLIGGPEGLSTECKQAAEQSWSLSPLTLPHPLVRVIVAESLYRAWSLTTNHPYHRE.

S-adenosyl-L-methionine contacts are provided by residues leucine 72, glycine 103, and 122–127 (LSPLTL).

It belongs to the RNA methyltransferase RlmH family. In terms of assembly, homodimer.

It is found in the cytoplasm. It catalyses the reaction pseudouridine(1915) in 23S rRNA + S-adenosyl-L-methionine = N(3)-methylpseudouridine(1915) in 23S rRNA + S-adenosyl-L-homocysteine + H(+). Functionally, specifically methylates the pseudouridine at position 1915 (m3Psi1915) in 23S rRNA. In Haemophilus ducreyi (strain 35000HP / ATCC 700724), this protein is Ribosomal RNA large subunit methyltransferase H.